A 361-amino-acid polypeptide reads, in one-letter code: MLLELARWLQQLESLFGLFNYLTFRGILAALTALFLSLWMGPAVIRKLAQFKGGQPIRQDGPQTHFSKAGTPTMGGSLILLTVTLSVLLWGDLRNRYVWLVLAVMICFGAIGWYDDWIKIVKRDPNGLKSRWKYLLQSIFGLAAGLFLYYTADVPAAITFYIPMFKSIALPLAGVSFVVIAYFWIVGFSNAVNLTDGLDGLAIMPTVLVACALGVFAYASGNVVFAEYLKIPLIPGAGELIIICSAIAGAGLGFLWFNTYPAMVFMGDIGALSLGAVLGTIAVIVRQEMVLVIMGGVFVIETLSVMIQVVSFKLTGKRVFRMAPIHHHFELKGWPEPRVIVRFWIISVVLVLIGLATLKVR.

A run of 10 helical transmembrane segments spans residues 25 to 45 (RGILAALTALFLSLWMGPAVI), 73 to 93 (TMGGSLILLTVTLSVLLWGDL), 98 to 118 (VWLVLAVMICFGAIGWYDDWI), 139 to 159 (IFGLAAGLFLYYTADVPAAIT), 168 to 188 (IALPLAGVSFVVIAYFWIVGF), 200 to 220 (GLAIMPTVLVACALGVFAYAS), 237 to 257 (AGELIIICSAIAGAGLGFLWF), 264 to 284 (VFMGDIGALSLGAVLGTIAVI), 290 to 310 (VLVIMGGVFVIETLSVMIQVV), and 339 to 359 (VIVRFWIISVVLVLIGLATLK).

Belongs to the glycosyltransferase 4 family. MraY subfamily. Mg(2+) is required as a cofactor.

Its subcellular location is the cell inner membrane. It catalyses the reaction UDP-N-acetyl-alpha-D-muramoyl-L-alanyl-gamma-D-glutamyl-meso-2,6-diaminopimeloyl-D-alanyl-D-alanine + di-trans,octa-cis-undecaprenyl phosphate = di-trans,octa-cis-undecaprenyl diphospho-N-acetyl-alpha-D-muramoyl-L-alanyl-D-glutamyl-meso-2,6-diaminopimeloyl-D-alanyl-D-alanine + UMP. Its pathway is cell wall biogenesis; peptidoglycan biosynthesis. In terms of biological role, catalyzes the initial step of the lipid cycle reactions in the biosynthesis of the cell wall peptidoglycan: transfers peptidoglycan precursor phospho-MurNAc-pentapeptide from UDP-MurNAc-pentapeptide onto the lipid carrier undecaprenyl phosphate, yielding undecaprenyl-pyrophosphoryl-MurNAc-pentapeptide, known as lipid I. The sequence is that of Phospho-N-acetylmuramoyl-pentapeptide-transferase from Xanthomonas euvesicatoria pv. vesicatoria (strain 85-10) (Xanthomonas campestris pv. vesicatoria).